The primary structure comprises 377 residues: ASTRA-associated protein 1 (377 aa).

WD repeat units lie at residues 10–50 (SHKS…PKKS), 53–90 (AHTD…VLEI), 230–262 (QYHN…KVII), 263–303 (HSDP…GDIS), and 342–377 (PTGK…AYNI).

It belongs to the WD repeat ASA1 family. As to quaternary structure, component of the ASTRA chromatin remodeling machinery complex.

It localises to the nucleus. Functionally, component of the ASTRA complex involved in chromatin remodeling. In Candida albicans (strain SC5314 / ATCC MYA-2876) (Yeast), this protein is ASTRA-associated protein 1 (ASA1).